The following is a 206-amino-acid chain: Methylthioribulose-1-phosphate dehydratase (206 aa).

Residues His-96 and His-98 each coordinate Zn(2+).

The protein belongs to the aldolase class II family. MtnB subfamily. Zn(2+) is required as a cofactor.

It catalyses the reaction 5-(methylsulfanyl)-D-ribulose 1-phosphate = 5-methylsulfanyl-2,3-dioxopentyl phosphate + H2O. Its pathway is amino-acid biosynthesis; L-methionine biosynthesis via salvage pathway; L-methionine from S-methyl-5-thio-alpha-D-ribose 1-phosphate: step 2/6. Catalyzes the dehydration of methylthioribulose-1-phosphate (MTRu-1-P) into 2,3-diketo-5-methylthiopentyl-1-phosphate (DK-MTP-1-P). This Exiguobacterium sibiricum (strain DSM 17290 / CCUG 55495 / CIP 109462 / JCM 13490 / 255-15) protein is Methylthioribulose-1-phosphate dehydratase.